Here is a 435-residue protein sequence, read N- to C-terminus: Divergent protein kinase domain 2B (435 aa).

A signal peptide spans 1–33; it reads MESQWRGAAATAFHQHWLARLLLWVSTLSCSFS. N-linked (GlcNAc...) asparagine glycans are attached at residues N102 and N395.

Belongs to the DIPK family.

The protein localises to the secreted. This Mus musculus (Mouse) protein is Divergent protein kinase domain 2B (Dipk2b).